Consider the following 2216-residue polypeptide: Protein Ycf2 (2216 aa).

1567–1574 (GSIGTGRS) lines the ATP pocket.

It belongs to the Ycf2 family.

It is found in the plastid stroma. Its function is as follows. Probable ATPase of unknown function. Its presence in a non-photosynthetic plant (Epifagus virginiana) and experiments in tobacco indicate that it has an essential function which is probably not related to photosynthesis. This Epifagus virginiana (Beechdrops) protein is Protein Ycf2.